Reading from the N-terminus, the 528-residue chain is Carboxysome shell carbonic anhydrase (528 aa).

The tract at residues 17–47 (PIAPNPRWQKENPTAHGSTDTGGFGYNGGNE) is disordered. Cys-184 contacts Zn(2+). The active-site Proton acceptor is Asp-186. The Zn(2+) site is built by His-252 and Cys-263.

The protein belongs to the beta-class carbonic anhydrase family. CsoSCA subfamily. In terms of assembly, homodimer. The cofactor is Zn(2+).

The protein resides in the carboxysome. The enzyme catalyses hydrogencarbonate + H(+) = CO2 + H2O. Inhibited by ethoxyzolamide and dithiothreitol (in crude extracts upon expression in E.coli). Reversible hydration of carbon dioxide. This bacteria encodes at least 3 CA enzymes. Essential for chemolithotrophic carbon dioxide fixation, supplies CO(2) to RuBisCO (ribulose bisphosphate carboxylase, cbbL-cbbS) in the carboxysome. This is Carboxysome shell carbonic anhydrase from Hydrogenovibrio crunogenus (strain DSM 25203 / XCL-2) (Thiomicrospira crunogena).